A 521-amino-acid chain; its full sequence is Probable rhamnogalacturonase B (521 aa).

Residues 1–21 (MRLHAFTLLSLLGLVPSFAAA) form the signal peptide. An intrachain disulfide couples Cys42 to Cys68. A glycan (N-linked (GlcNAc...) asparagine) is linked at Asn145. The active-site Proton donor is Asp219. A disulfide bridge connects residues Cys221 and Cys238. Asn239 carries an N-linked (GlcNAc...) asparagine glycan. Residue His294 is part of the active site. Asn321 carries N-linked (GlcNAc...) asparagine glycosylation. 2 cysteine pairs are disulfide-bonded: Cys344–Cys350 and Cys372–Cys381. Residues 462-521 (ETPAAASRSEQVVQGAPQETGQSAPESAGPVPSGNPGPVPTGGSRPSRHRHGHHHFGSAI) are disordered. Residues 469-486 (RSEQVVQGAPQETGQSAP) are compositionally biased toward polar residues. A compositionally biased stretch (basic residues) spans 507-521 (PSRHRHGHHHFGSAI).

Belongs to the glycosyl hydrolase 28 family.

The protein localises to the secreted. It catalyses the reaction Endohydrolysis of alpha-D-GalA-(1-&gt;2)-alpha-L-Rha glycosidic bond in the rhamnogalacturonan I backbone with initial inversion of anomeric configuration releasing oligosaccharides with beta-D-GalA at the reducing end.. Functionally, pectinolytic enzymes consist of four classes of enzymes: pectine lyase, polygalacturonase, pectin methylesterase and rhamnogalacturonase. Hydrolyzes alpha-D-galacturonopyranosyl-(1,2)-alpha-L-rhamnopyranosyl linkages in the backbone of the hairy regions of pectins. This chain is Probable rhamnogalacturonase B (rhgB), found in Aspergillus fumigatus (strain ATCC MYA-4609 / CBS 101355 / FGSC A1100 / Af293) (Neosartorya fumigata).